We begin with the raw amino-acid sequence, 539 residues long: Chaperonin GroEL (539 aa).

ATP is bound by residues 29–32 (TLGP), 86–90 (DGTTT), Gly413, 479–481 (DAL), and Asp495.

It belongs to the chaperonin (HSP60) family. In terms of assembly, forms a cylinder of 14 subunits composed of two heptameric rings stacked back-to-back. Interacts with the co-chaperonin GroES.

The protein resides in the cytoplasm. It carries out the reaction ATP + H2O + a folded polypeptide = ADP + phosphate + an unfolded polypeptide.. Together with its co-chaperonin GroES, plays an essential role in assisting protein folding. The GroEL-GroES system forms a nano-cage that allows encapsulation of the non-native substrate proteins and provides a physical environment optimized to promote and accelerate protein folding. This chain is Chaperonin GroEL, found in Thermosipho africanus (strain TCF52B).